The sequence spans 124 residues: Large ribosomal subunit protein bL17 (124 aa).

This sequence belongs to the bacterial ribosomal protein bL17 family. Part of the 50S ribosomal subunit. Contacts protein L32.

The chain is Large ribosomal subunit protein bL17 from Borrelia turicatae (strain 91E135).